A 189-amino-acid polypeptide reads, in one-letter code: Glycerol-3-phosphate acyltransferase 1 (189 aa).

5 consecutive transmembrane segments (helical) span residues 12–32 (MQFL…AYIV), 61–81 (GYFV…VSIA), 88–108 (FTFV…PMLF), 124–144 (IAFD…FYLI), and 164–184 (ILYS…VLIL).

It belongs to the PlsY family. As to quaternary structure, probably interacts with PlsX.

The protein resides in the cell membrane. The catalysed reaction is an acyl phosphate + sn-glycerol 3-phosphate = a 1-acyl-sn-glycero-3-phosphate + phosphate. It functions in the pathway lipid metabolism; phospholipid metabolism. In terms of biological role, catalyzes the transfer of an acyl group from acyl-phosphate (acyl-PO(4)) to glycerol-3-phosphate (G3P) to form lysophosphatidic acid (LPA). This enzyme utilizes acyl-phosphate as fatty acyl donor, but not acyl-CoA or acyl-ACP. The polypeptide is Glycerol-3-phosphate acyltransferase 1 (Bacillus anthracis).